The sequence spans 71 residues: Putative membrane protein insertion efficiency factor (71 aa).

It belongs to the UPF0161 family.

It localises to the cell inner membrane. In terms of biological role, could be involved in insertion of integral membrane proteins into the membrane. This is Putative membrane protein insertion efficiency factor from Nitrosospira multiformis (strain ATCC 25196 / NCIMB 11849 / C 71).